We begin with the raw amino-acid sequence, 1183 residues long: Translation initiation factor IF-2 (1183 aa).

Disordered regions lie at residues serine 65–isoleucine 512 and leucine 540–leucine 579. Over residues threonine 83–threonine 99 the composition is skewed to basic and acidic residues. Residues glutamate 100–alanine 130 are compositionally biased toward polar residues. The span at proline 220–proline 229 shows a compositional bias: basic and acidic residues. Residues glutamine 231–arginine 270 show a composition bias toward polar residues. Over residues isoleucine 288–asparagine 304 the composition is skewed to basic and acidic residues. Composition is skewed to polar residues over residues alanine 321 to isoleucine 336 and asparagine 357 to glycine 367. Basic and acidic residues predominate over residues glycine 485 to arginine 499. Composition is skewed to basic residues over residues serine 544–asparagine 553 and leucine 560–arginine 574. Positions arginine 675–leucine 847 constitute a tr-type G domain. The tract at residues glycine 684–threonine 691 is G1. GTP is bound at residue glycine 684–threonine 691. Positions glycine 709–histidine 713 are G2. The G3 stretch occupies residues aspartate 734–glycine 737. GTP contacts are provided by residues aspartate 734–histidine 738 and asparagine 788–aspartate 791. A G4 region spans residues asparagine 788–aspartate 791. The interval serine 824–isoleucine 826 is G5.

This sequence belongs to the TRAFAC class translation factor GTPase superfamily. Classic translation factor GTPase family. IF-2 subfamily.

It is found in the cytoplasm. Functionally, one of the essential components for the initiation of protein synthesis. Protects formylmethionyl-tRNA from spontaneous hydrolysis and promotes its binding to the 30S ribosomal subunits. Also involved in the hydrolysis of GTP during the formation of the 70S ribosomal complex. The chain is Translation initiation factor IF-2 from Prochlorococcus marinus (strain NATL2A).